We begin with the raw amino-acid sequence, 627 residues long: ATP-dependent zinc metalloprotease FtsH 2 (627 aa).

At 1–7 the chain is on the cytoplasmic side; sequence MKFSWRT. Residues 8 to 28 form a helical membrane-spanning segment; it reads ALLWSLPLLVVGFFFWQGSFG. The Lumenal segment spans residues 29–117; sequence GADANLGSNT…SHPVRNNGMV (89 aa). Residues 118–138 form a helical membrane-spanning segment; the sequence is WGFVGNLIFPVLLIASLFFLF. Residues 139 to 627 lie on the Cytoplasmic side of the membrane; it reads RRSSNMPGGP…PVKEQLIPQL (489 aa). 212-219 serves as a coordination point for ATP; sequence GPPGTGKT. H433 serves as a coordination point for Zn(2+). The active site involves E434. H437 and D511 together coordinate Zn(2+).

In the central section; belongs to the AAA ATPase family. It in the C-terminal section; belongs to the peptidase M41 family. Homohexamer (Potential). Part of a large (&gt;500 kDa) complex that includes FtsH3 and PSII. Coimmunoprecipitates with YidC. Zn(2+) is required as a cofactor.

It localises to the cellular thylakoid membrane. Acts as a processive, ATP-dependent zinc metallopeptidase for both cytoplasmic and membrane proteins. Plays a role in the quality control of integral membrane proteins. In terms of biological role, plays a role in the selective replacement of photosystem II (PSII) protein D1 in the PSII repair cycle following visible-light and UV-B induced damage. If damaged D1 is not removed then new D1 cannot be inserted to restore the PSII reaction center. Seems to also degrade damaged and/or unassembled PSII proteins D2 and PsbB (CP47). May recognize D1 via its first 20 amino acids, as deletion of these prevents the PSII repair cycle. Also seems to degrade cytoplasmic GGPS, glucosylglycerol-phosphate synthase. This Synechocystis sp. (strain ATCC 27184 / PCC 6803 / Kazusa) protein is ATP-dependent zinc metalloprotease FtsH 2 (ftsH2).